Reading from the N-terminus, the 94-residue chain is Small nuclear ribonucleoprotein E (94 aa).

Residues 14–94 (INCIFNFLQQ…DNITLITSAD (81 aa)) enclose the Sm domain.

The protein belongs to the snRNP Sm proteins family. In terms of assembly, component of the Sm core complex, present in spliceosomal snRNP U1, U2, U4/U6 and U5. The core complex contains SMB1, SMD1, SMD2, SMD3, SME1, SMX3 and SMX2 (Sm proteins B, D1, D2, D3, E, F and G, respectively), and is probably a heptameric ring structure. SME1 specifically interacts with SMX2 and SMX3. Component of the U4/U6-U5 tri-snRNP complex composed of the U4, U6 and U5 snRNAs and at least PRP3, PRP4, PRP6, PRP8, PRP18, PRP31, PRP38, SNU13, SNU23, SNU66, SNU114, SPP381, SMB1, SMD1, SMD2, SMD3, SMX2, SMX3, LSM2, LSM3, LSM4, LSM5, LSM6, LSM7, LSM8, BRR2 and DIB1.

The protein localises to the cytoplasm. It is found in the nucleus. Functionally, involved in pre-mRNA splicing. Binds and is required for the stability of snRNA U1, U2, U4 and U5 which contain a highly conserved structural motif called the Sm binding site. Involved in cap modification. The chain is Small nuclear ribonucleoprotein E (SME1) from Saccharomyces cerevisiae (strain ATCC 204508 / S288c) (Baker's yeast).